The chain runs to 85 residues: Cell division topological specificity factor (85 aa).

The protein belongs to the MinE family.

In terms of biological role, prevents the cell division inhibition by proteins MinC and MinD at internal division sites while permitting inhibition at polar sites. This ensures cell division at the proper site by restricting the formation of a division septum at the midpoint of the long axis of the cell. The protein is Cell division topological specificity factor of Dechloromonas aromatica (strain RCB).